A 507-amino-acid polypeptide reads, in one-letter code: Chromosomal replication initiator protein DnaA (507 aa).

The segment at 1–87 (MSVELWQQCV…IGSKRSSAPR (87 aa)) is domain I, interacts with DnaA modulators. Positions 85–110 (APRAAPNAPLAAAQVSQAQANAAPAS) are enriched in low complexity. Residues 85 to 158 (APRAAPNAPL…QQAPVRAEQR (74 aa)) are disordered. Residues 87–170 (RAAPNAPLAA…QVEGALKHTS (84 aa)) form a domain II region. A compositionally biased stretch (basic and acidic residues) spans 126–140 (QKTEEISEEPSRDSF). Residues 171–387 (YLNRTFTFEN…GALKRVIAHS (217 aa)) are domain III, AAA+ region. ATP contacts are provided by Gly-215, Gly-217, Lys-218, and Thr-219. The domain IV, binds dsDNA stretch occupies residues 388-507 (HFMGRDITIE…YKNLLRTLTT (120 aa)).

It belongs to the DnaA family. Oligomerizes as a right-handed, spiral filament on DNA at oriC.

It is found in the cytoplasm. Plays an essential role in the initiation and regulation of chromosomal replication. ATP-DnaA binds to the origin of replication (oriC) to initiate formation of the DNA replication initiation complex once per cell cycle. Binds the DnaA box (a 9 base pair repeat at the origin) and separates the double-stranded (ds)DNA. Forms a right-handed helical filament on oriC DNA; dsDNA binds to the exterior of the filament while single-stranded (ss)DNA is stabiized in the filament's interior. The ATP-DnaA-oriC complex binds and stabilizes one strand of the AT-rich DNA unwinding element (DUE), permitting loading of DNA polymerase. After initiation quickly degrades to an ADP-DnaA complex that is not apt for DNA replication. Binds acidic phospholipids. This chain is Chromosomal replication initiator protein DnaA, found in Pseudomonas fluorescens (strain Pf0-1).